Consider the following 136-residue polypeptide: uncharacterized protein (136 aa).

Residues 102–118 (FVIVFFFFSFSLSISCV) traverse the membrane as a helical segment.

It is found in the membrane. This is an uncharacterized protein from Saccharomyces cerevisiae (strain ATCC 204508 / S288c) (Baker's yeast).